The following is a 257-amino-acid chain: Deoxyribose-phosphate aldolase (257 aa).

The Proton donor/acceptor role is filled by D102. K166 functions as the Schiff-base intermediate with acetaldehyde in the catalytic mechanism. The active-site Proton donor/acceptor is the K198.

It belongs to the DeoC/FbaB aldolase family. DeoC type 2 subfamily.

The protein resides in the cytoplasm. It catalyses the reaction 2-deoxy-D-ribose 5-phosphate = D-glyceraldehyde 3-phosphate + acetaldehyde. The protein operates within carbohydrate degradation; 2-deoxy-D-ribose 1-phosphate degradation; D-glyceraldehyde 3-phosphate and acetaldehyde from 2-deoxy-alpha-D-ribose 1-phosphate: step 2/2. Functionally, catalyzes a reversible aldol reaction between acetaldehyde and D-glyceraldehyde 3-phosphate to generate 2-deoxy-D-ribose 5-phosphate. The protein is Deoxyribose-phosphate aldolase of Shewanella loihica (strain ATCC BAA-1088 / PV-4).